We begin with the raw amino-acid sequence, 205 residues long: Thiamine-phosphate synthase (205 aa).

Residues 34 to 38 (QLRCK) and N66 each bind 4-amino-2-methyl-5-(diphosphooxymethyl)pyrimidine. Mg(2+) contacts are provided by D67 and D86. A 4-amino-2-methyl-5-(diphosphooxymethyl)pyrimidine-binding site is contributed by S105. 131–133 (TTT) contacts 2-[(2R,5Z)-2-carboxy-4-methylthiazol-5(2H)-ylidene]ethyl phosphate. K134 contributes to the 4-amino-2-methyl-5-(diphosphooxymethyl)pyrimidine binding site. Position 163 (G163) interacts with 2-[(2R,5Z)-2-carboxy-4-methylthiazol-5(2H)-ylidene]ethyl phosphate.

This sequence belongs to the thiamine-phosphate synthase family. It depends on Mg(2+) as a cofactor.

The catalysed reaction is 2-[(2R,5Z)-2-carboxy-4-methylthiazol-5(2H)-ylidene]ethyl phosphate + 4-amino-2-methyl-5-(diphosphooxymethyl)pyrimidine + 2 H(+) = thiamine phosphate + CO2 + diphosphate. It catalyses the reaction 2-(2-carboxy-4-methylthiazol-5-yl)ethyl phosphate + 4-amino-2-methyl-5-(diphosphooxymethyl)pyrimidine + 2 H(+) = thiamine phosphate + CO2 + diphosphate. It carries out the reaction 4-methyl-5-(2-phosphooxyethyl)-thiazole + 4-amino-2-methyl-5-(diphosphooxymethyl)pyrimidine + H(+) = thiamine phosphate + diphosphate. Its pathway is cofactor biosynthesis; thiamine diphosphate biosynthesis; thiamine phosphate from 4-amino-2-methyl-5-diphosphomethylpyrimidine and 4-methyl-5-(2-phosphoethyl)-thiazole: step 1/1. Functionally, condenses 4-methyl-5-(beta-hydroxyethyl)thiazole monophosphate (THZ-P) and 2-methyl-4-amino-5-hydroxymethyl pyrimidine pyrophosphate (HMP-PP) to form thiamine monophosphate (TMP). This chain is Thiamine-phosphate synthase, found in Neisseria meningitidis serogroup B (strain ATCC BAA-335 / MC58).